Reading from the N-terminus, the 413-residue chain is ORC1-type DNA replication protein 10 (413 aa).

ATP is bound by residues 63 to 67 (VGKTA), Tyr-211, and Arg-223.

This sequence belongs to the CDC6/cdc18 family.

In terms of biological role, involved in regulation of DNA replication. The sequence is that of ORC1-type DNA replication protein 10 (orc10) from Halobacterium salinarum (strain ATCC 700922 / JCM 11081 / NRC-1) (Halobacterium halobium).